A 178-amino-acid chain; its full sequence is Probable DNA-directed RNA polymerase subunit delta (178 aa).

Residues 14-81 (LSLIDVAHFI…GNNTWGLRAW (68 aa)) enclose the HTH HARE-type domain. 2 disordered regions span residues 88-122 (DEEV…DYDD) and 141-178 (LDED…PEDK). Composition is skewed to acidic residues over residues 105–122 (DDED…DYDD), 141–150 (LDEDEDDDDH), and 161–178 (TVED…PEDK).

It belongs to the RpoE family. In terms of assembly, RNAP is composed of a core of 2 alpha, a beta and a beta' subunits. The core is associated with a delta subunit and one of several sigma factors.

Functionally, participates in both the initiation and recycling phases of transcription. In the presence of the delta subunit, RNAP displays an increased specificity of transcription, a decreased affinity for nucleic acids, and an increased efficiency of RNA synthesis because of enhanced recycling. In Listeria monocytogenes serovar 1/2a (strain ATCC BAA-679 / EGD-e), this protein is Probable DNA-directed RNA polymerase subunit delta.